The primary structure comprises 486 residues: N-succinylglutamate 5-semialdehyde dehydrogenase (486 aa).

An NAD(+)-binding site is contributed by 220–225 (GSSRTG). Catalysis depends on residues Glu243 and Cys277.

This sequence belongs to the aldehyde dehydrogenase family. AstD subfamily.

The catalysed reaction is N-succinyl-L-glutamate 5-semialdehyde + NAD(+) + H2O = N-succinyl-L-glutamate + NADH + 2 H(+). It functions in the pathway amino-acid degradation; L-arginine degradation via AST pathway; L-glutamate and succinate from L-arginine: step 4/5. Its function is as follows. Catalyzes the NAD-dependent reduction of succinylglutamate semialdehyde into succinylglutamate. This chain is N-succinylglutamate 5-semialdehyde dehydrogenase, found in Shewanella woodyi (strain ATCC 51908 / MS32).